We begin with the raw amino-acid sequence, 256 residues long: Small ribosomal subunit protein uS2 (256 aa).

Belongs to the universal ribosomal protein uS2 family.

This is Small ribosomal subunit protein uS2 from Brucella abortus (strain S19).